The following is a 92-amino-acid chain: Protamine-2 (92 aa).

Residues 1-76 (MVRCRVRSPS…RRACRHRRHR (76 aa)) are disordered. Residues 7 to 20 (RSPSESPQQGSGQQ) are compositionally biased toward low complexity. Phosphoserine is present on residues S8 and S10. The segment covering 21–36 (RENERQDQDQELRPED) has biased composition (basic and acidic residues). Residues 42–76 (RTHRGRYHYRHRSHTRRRRSCRRRRRRACRHRRHR) are compositionally biased toward basic residues.

This sequence belongs to the protamine P2 family. As to quaternary structure, interacts with TDRP. In terms of processing, proteolytic processing into mature chains is required for histone eviction during spermatogenesis. Transition proteins (TNP1 and TNP2) are required for processing. As to expression, testis.

Its subcellular location is the nucleus. It localises to the chromosome. Functionally, protamines substitute for histones in the chromatin of sperm during the haploid phase of spermatogenesis. They compact sperm DNA into a highly condensed, stable and inactive complex. The protein is Protamine-2 (PRM2) of Sus scrofa (Pig).